The sequence spans 380 residues: MLRRKPSNASDKEPTQKKKLSLQRSSSFKDFAKSKPSSPVVSEKEFNLDDNIPEDDSGVLTPEDSGKSGKKLGKKWRAVISRTMNRKMGKMMVKALSEEMGDTLEEGSASPTSPDCSLDSPGPEKMALAFTEQEEREPPSLSRQTSTGSELCSPGPGSGSFLEESPAPQYTGPFCGRARVHTDFTPSPYDHDSLKLQKGDVIQIVEKPPVGTWLGLLNGKLGSFKFIYVDVLPEEAVGPVRPSRRQSKGKRPKPKTLHELLERIGLEEHTSTLLLNGYQTLEDFKELRETHLNELNIMDPQHRAKLLTAAELLLDYDTGSEEAEEGAESSQEPVAHTVSEPKVDIPRDSGCFEGSESGRDEAELAGTEEQLQGLSLSGAP.

Disordered regions lie at residues 1–76 (MLRR…GKKW) and 96–168 (LSEE…SPAP). Over residues 22–41 (LQRSSSFKDFAKSKPSSPVV) the composition is skewed to low complexity. Phosphoserine occurs at positions 27, 34, and 42. The residue at position 61 (T61) is a Phosphothreonine. At S97 the chain carries Phosphoserine. T103 is subject to Phosphothreonine. S110 carries the phosphoserine modification. The residue at position 112 (T112) is a Phosphothreonine. 2 positions are modified to phosphoserine: S113 and S120. Polar residues predominate over residues 141-150 (LSRQTSTGSE). The SH3 domain maps to 173–234 (PFCGRARVHT…KFIYVDVLPE (62 aa)). Residues 252–316 (PKPKTLHELL…LTAAELLLDY (65 aa)) form the SAM domain. Phosphothreonine is present on T318. A compositionally biased stretch (acidic residues) spans 318–327 (TGSEEAEEGA). The segment at 318–380 (TGSEEAEEGA…LQGLSLSGAP (63 aa)) is disordered. The residue at position 320 (S320) is a Phosphoserine. Positions 369–380 (EQLQGLSLSGAP) are enriched in polar residues.

As to expression, preferentially expressed in lymphoid tissues. Expressed in bone marrow, thymus, spleen, lymph nodes and Peyer patches of gut. In the spleen and lymph nodes, expressed in both T- and B-cells. In the thymus, in the medulla and cortex.

Functionally, may function as a signaling adapter protein in lymphocytes. The chain is SAM and SH3 domain-containing protein 3 (Sash3) from Mus musculus (Mouse).